The sequence spans 1161 residues: Nardilysin (1161 aa).

Positions 1–18 (MLRRVAVAAVFATGRKLR) are cleaved as a signal peptide. 2 disordered regions span residues 42–105 (KPFP…KSPS) and 130–218 (VEGK…KKTT). 3 positions are modified to phosphoserine: Ser85, Ser91, and Ser93. Acidic residues predominate over residues 138–209 (TDEEEEEEEE…EENELEELEE (72 aa)). His244 contacts Zn(2+). Glu247 serves as the catalytic Proton acceptor. His248 and Glu325 together coordinate Zn(2+).

Belongs to the peptidase M16 family. In terms of assembly, interacts with BACE1 and NRG1. It depends on Zn(2+) as a cofactor. Testis, and in a lower level in brain, heart and adrenal glands.

The protein localises to the mitochondrion. The protein resides in the cell projection. It localises to the dendrite. It catalyses the reaction Hydrolysis of polypeptides, preferably at -Xaa-|-Arg-Lys-, and less commonly at -Arg-|-Arg-Xaa-, in which Xaa is not Arg or Lys.. Cleaves peptide substrates on the N-terminus of arginine residues in dibasic pairs. Is a critical activator of BACE1- and ADAM17-mediated pro-neuregulin ectodomain shedding, involved in the positive regulation of axonal maturation and myelination. Required for proper functioning of 2-oxoglutarate dehydrogenase (OGDH). This is Nardilysin from Rattus norvegicus (Rat).